Here is a 186-residue protein sequence, read N- to C-terminus: UPF0157 protein SCO7215 (186 aa).

The protein belongs to the UPF0157 (GrpB) family.

This is UPF0157 protein SCO7215 from Streptomyces coelicolor (strain ATCC BAA-471 / A3(2) / M145).